We begin with the raw amino-acid sequence, 89 residues long: Large ribosomal subunit protein eL31 (89 aa).

Belongs to the eukaryotic ribosomal protein eL31 family.

The chain is Large ribosomal subunit protein eL31 (rpl31e) from Thermoplasma acidophilum (strain ATCC 25905 / DSM 1728 / JCM 9062 / NBRC 15155 / AMRC-C165).